The chain runs to 498 residues: Glycerol kinase (498 aa).

Position 13 (Thr13) interacts with ADP. ATP is bound by residues Thr13, Thr14, and Ser15. Thr13 serves as a coordination point for sn-glycerol 3-phosphate. ADP is bound at residue Arg17. Residues Arg83, Glu84, Tyr135, and Asp244 each contribute to the sn-glycerol 3-phosphate site. Glycerol is bound by residues Arg83, Glu84, Tyr135, Asp244, and Gln245. Residues Thr266 and Gly309 each contribute to the ADP site. Thr266, Gly309, Gln313, and Gly410 together coordinate ATP. ADP-binding residues include Gly410 and Asn414.

This sequence belongs to the FGGY kinase family. As to quaternary structure, homotetramer and homodimer (in equilibrium).

The catalysed reaction is glycerol + ATP = sn-glycerol 3-phosphate + ADP + H(+). It participates in polyol metabolism; glycerol degradation via glycerol kinase pathway; sn-glycerol 3-phosphate from glycerol: step 1/1. With respect to regulation, activated by phosphorylation and inhibited by fructose 1,6-bisphosphate (FBP). Key enzyme in the regulation of glycerol uptake and metabolism. Catalyzes the phosphorylation of glycerol to yield sn-glycerol 3-phosphate. The chain is Glycerol kinase from Symbiobacterium thermophilum (strain DSM 24528 / JCM 14929 / IAM 14863 / T).